The sequence spans 424 residues: 3-ketoacyl-CoA thiolase B, peroxisomal (424 aa).

A peroxisome-targeting transit peptide spans 1–26 (MHRLQVVLGHLAGRPESSSALQAAPC). The tract at residues 1-26 (MHRLQVVLGHLAGRPESSSALQAAPC) is PTS2-type peroxisomal targeting signal. Catalysis depends on Cys123, which acts as the Acyl-thioester intermediate. 2 positions are modified to N6-acetyllysine: Lys173 and Lys234. The CoA site is built by Arg249, Thr252, and Ser276. Cys408 (proton donor/acceptor) is an active-site residue.

Belongs to the thiolase-like superfamily. Thiolase family. Homodimer. Interacts (via PTS2-type peroxisomal targeting signal region) with PEX7; leading to its translocation into peroxisomes. Mainly expressed in liver; weaker levels in kidney, intestine and white adipose tissue.

The protein resides in the peroxisome. The enzyme catalyses an acyl-CoA + acetyl-CoA = a 3-oxoacyl-CoA + CoA. It carries out the reaction 2 acetyl-CoA = acetoacetyl-CoA + CoA. The catalysed reaction is hexanoyl-CoA + acetyl-CoA = 3-oxooctanoyl-CoA + CoA. It catalyses the reaction tetradecanoyl-CoA + acetyl-CoA = 3-oxohexadecanoyl-CoA + CoA. The enzyme catalyses 3-oxohexadecanedioyl-CoA + CoA = tetradecanedioyl-CoA + acetyl-CoA. It carries out the reaction 3-oxo-(6Z,9Z,12Z,15Z,18Z,21Z)-tetracosahexaenoyl-CoA + CoA = (4Z,7Z,10Z,13Z,16Z,19Z)-docosahexaenoyl-CoA + acetyl-CoA. It participates in lipid metabolism; peroxisomal fatty acid beta-oxidation. Functionally, responsible for the thiolytic cleavage of straight chain 3-keto fatty acyl-CoAs (3-oxoacyl-CoAs). Plays an important role in fatty acid peroxisomal beta-oxidation. Catalyzes the cleavage of short, medium, long, and very long straight chain 3-oxoacyl-CoAs. This chain is 3-ketoacyl-CoA thiolase B, peroxisomal, found in Mus musculus (Mouse).